Here is a 235-residue protein sequence, read N- to C-terminus: Small ribosomal subunit protein uS2 (235 aa).

The protein belongs to the universal ribosomal protein uS2 family.

The sequence is that of Small ribosomal subunit protein uS2 from Synechococcus sp. (strain RCC307).